A 1234-amino-acid chain; its full sequence is DNA-directed RNA polymerase I subunit RPA2 (1234 aa).

A C4-type zinc finger spans residues 1119–1150 (CRQCGSFLSTQPTVSPFIGKRKAVSTVRCRNC).

This sequence belongs to the RNA polymerase beta chain family. In terms of assembly, component of the RNA polymerase I (Pol I) complex consisting of 14 subunits.

The protein localises to the nucleus. It is found in the nucleolus. It catalyses the reaction RNA(n) + a ribonucleoside 5'-triphosphate = RNA(n+1) + diphosphate. Its function is as follows. DNA-dependent RNA polymerase catalyzes the transcription of DNA into RNA using the four ribonucleoside triphosphates as substrates. Second largest core component of RNA polymerase I which synthesizes ribosomal RNA precursors. Proposed to contribute to the polymerase catalytic activity and forms the polymerase active center together with the largest subunit. Pol I is composed of mobile elements and RPA2 is part of the core element with the central large cleft and probably a clamp element that moves to open and close the cleft. This chain is DNA-directed RNA polymerase I subunit RPA2 (acr-2), found in Neurospora crassa (strain ATCC 24698 / 74-OR23-1A / CBS 708.71 / DSM 1257 / FGSC 987).